Here is a 467-residue protein sequence, read N- to C-terminus: Argininosuccinate lyase (467 aa).

This sequence belongs to the lyase 1 family. Argininosuccinate lyase subfamily.

Its subcellular location is the cytoplasm. It catalyses the reaction 2-(N(omega)-L-arginino)succinate = fumarate + L-arginine. It participates in amino-acid biosynthesis; L-arginine biosynthesis; L-arginine from L-ornithine and carbamoyl phosphate: step 3/3. This chain is Argininosuccinate lyase, found in Anaeromyxobacter sp. (strain K).